The primary structure comprises 212 residues: Prolactin (212 aa).

Residues 1–24 form the signal peptide; it reads MAHRETNGSKLFITVLCMVAACSA. 2 disulfide bridges follow: cysteine 70-cysteine 185 and cysteine 202-cysteine 212.

The protein belongs to the somatotropin/prolactin family.

It is found in the secreted. This chain is Prolactin (prl), found in Sparus aurata (Gilthead sea bream).